The following is a 314-amino-acid chain: Acetaldehyde dehydrogenase 1/2 (314 aa).

Residue serine 12–isoleucine 15 coordinates NAD(+). Cysteine 130 functions as the Acyl-thioester intermediate in the catalytic mechanism. NAD(+) is bound by residues serine 161–asparagine 169 and asparagine 288.

Belongs to the acetaldehyde dehydrogenase family.

It catalyses the reaction acetaldehyde + NAD(+) + CoA = acetyl-CoA + NADH + H(+). The sequence is that of Acetaldehyde dehydrogenase 1/2 from Rhizorhabdus wittichii (strain DSM 6014 / CCUG 31198 / JCM 15750 / NBRC 105917 / EY 4224 / RW1) (Sphingomonas wittichii).